A 306-amino-acid chain; its full sequence is Serine/threonine-protein kinase KIN28 (306 aa).

A Protein kinase domain is found at Tyr7–Phe290. Residues Val13–Val21 and Lys36 each bind ATP. Asp129 functions as the Proton acceptor in the catalytic mechanism. A Phosphothreonine; by CAK modification is found at Thr162.

It belongs to the protein kinase superfamily. CMGC Ser/Thr protein kinase family. CDC2/CDKX subfamily. As to quaternary structure, CCL1 and KIN28 form the TFIIK complex, a component of the TFIIH holo complex. Component of a complex consisting of KIN28, CCL1 and TFB3. Interacts with TFB3. Also interacts with HNT1 and HOG1. Phosphorylation of Thr-162 regulates the affinity of interaction between CCL1, KIN28 and TFB3. Thr-162 phosphorylation does not vary through the cell cycle and is necessary for full kinase activity.

It localises to the nucleus. It carries out the reaction [DNA-directed RNA polymerase] + ATP = phospho-[DNA-directed RNA polymerase] + ADP + H(+). Its function is as follows. Catalytic component of the TFIIK complex (KIN28-CCL1 dimer) which is the protein kinase component of transcription factor IIH (TFIIH) and phosphorylates the C-terminal domain of RNA polymerase II during transition from transcription to elongation after preinitiation complex (PIC) formation, thereby positively regulating transcription. TFIIH (or factor B) is essential for both basal and activated transcription, and is involved in nucleotide excision repair (NER) of damaged DNA. TFIIH has DNA-dependent ATPase activity and is essential for polymerase II transcription in vitro. Essential for cell proliferation. The protein is Serine/threonine-protein kinase KIN28 (KIN28) of Saccharomyces cerevisiae (strain ATCC 204508 / S288c) (Baker's yeast).